Consider the following 695-residue polypeptide: Threonine--tRNA ligase (695 aa).

Positions 1 to 66 (MSAPARPAPA…DTDVEVTPVA (66 aa)) constitute a TGS domain. Residues 263-569 (DHRKLGVELD…LTEHYAGAFP (307 aa)) are catalytic. Residues Cys368, His419, and His546 each coordinate Zn(2+).

It belongs to the class-II aminoacyl-tRNA synthetase family. Homodimer. Zn(2+) is required as a cofactor.

It is found in the cytoplasm. It carries out the reaction tRNA(Thr) + L-threonine + ATP = L-threonyl-tRNA(Thr) + AMP + diphosphate + H(+). Its function is as follows. Catalyzes the attachment of threonine to tRNA(Thr) in a two-step reaction: L-threonine is first activated by ATP to form Thr-AMP and then transferred to the acceptor end of tRNA(Thr). Also edits incorrectly charged L-seryl-tRNA(Thr). This chain is Threonine--tRNA ligase, found in Mycolicibacterium gilvum (strain PYR-GCK) (Mycobacterium gilvum (strain PYR-GCK)).